The following is a 1365-amino-acid chain: Zinc finger protein 423 (1365 aa).

The segment covering 1-11 has biased composition (basic residues); it reads MSRRKQAKPRS. The segment at 1 to 69 is disordered; sequence MSRRKQAKPR…SHDERVGEED (69 aa). The segment covering 37–51 has biased composition (basic and acidic residues); sequence VSERDSDRKESRAVG. Residues 76–98 form a C2H2-type 1 zinc finger; that stretch reads FTCDNCQQDFECLADLTEHRTNH. Residues 99–126 form a disordered region; that stretch reads CPADGDDDPGLSWVASSPSSKDVASPSQ. Residues 112 to 126 show a composition bias toward low complexity; sequence VASSPSSKDVASPSQ. C2H2-type zinc fingers lie at residues 150-172, 178-200, 206-228, and 234-256; these read YPCQFCDKSFSRLSYLKRHEQIH, FKCTFCSRLFKHKRSRDRHVKLH, YSCQECEAAFSRSDHLKIHLKTH, and FKCSICKRGFSSTSSLQSHMQAH. Positions 250–280 are disordered; sequence QSHMQAHRKNKEHLAKKDQGKRDGSSSDVTE. Basic and acidic residues predominate over residues 261–274; that stretch reads EHLAKKDQGKRDGS. 3 consecutive C2H2-type zinc fingers follow at residues 286-309, 318-341, and 346-368; these read YMCDYCEETFSQTDELEKHVLTQH, LQCIHCPEIFSDEGTLLTHIDRTH, and HKCPMCAEQFPSVEDVYCHLDSH. The interval 366 to 429 is disordered; the sequence is DSHRQPDSSN…LAPSSDHDDG (64 aa). The segment covering 386-400 has biased composition (low complexity); that stretch reads SVASMSSATPDSSAS. The C2H2-type 9; degenerate zinc-finger motif lies at 437–461; that stretch reads YSCPYCSKRDFNSLAVLEIHLKTIH. 3 consecutive C2H2-type zinc fingers follow at residues 469 to 492, 513 to 536, and 555 to 578; these read HTCQLCLETLPTLYNLNEHVRKAH, FHCNYCPDMFADINSLQEHIRVSH, and FFCNQCSMGFLTESSLTEHIQQTH. The segment at 603–628 adopts a C2H2-type 13; atypical zinc-finger fold; that stretch reads YSCPYCTNSPIFGSLLKLTKHIKENH. 7 consecutive C2H2-type zinc fingers follow at residues 675 to 697, 705 to 728, 736 to 759, 764 to 787, 794 to 817, 831 to 853, and 857 to 880; these read YPCNQCDLRFSSFEGFQAHLKSH, QSCPQCNKEDFDSQEALLQHLTIH, YVCESCDKQFSSVDDLQKHLLDMH, YHCTLCQEVFDSKVSIQVHLAVKH, YRCTACAWDFRKESDLQLHVKHSH, RKCIFCGETFGTEVELQCHITTH, and YNCRLCGKAFHAIVLLERHLREKH. The span at 885–895 shows a compositional bias: gly residues; sequence GGNGNGNGGSQ. Residues 885–916 form a disordered region; that stretch reads GGNGNGNGGSQNGTPNGVTQSSKRSTAGSTAA. Polar residues predominate over residues 902-913; that stretch reads VTQSSKRSTAGS. The C2H2-type 21; degenerate zinc finger occupies 954-976; that stretch reads YACDICGAAYTMESLLQNHRLRD. 8 C2H2-type zinc fingers span residues 1000–1022, 1029–1051, 1090–1112, 1201–1224, 1249–1271, 1279–1301, 1310–1333, and 1340–1363; these read HKCNVCSRTFFSENGLREHAQTH, YMCPICGERFPSLLTLTEHKVTH, FRCVVCMQTVTSTLELKIHGTFH, LRCSECAVKFETLEDLESHIQVDH, YQCIKCQMTFETEREIQIHVANH, HECKLCNQMFDSPAKLLCHLIEH, FKCPVCFTVFVQANKLQQHIFAVH, and YDCSQCPQKFFFQTELQNHTLSQH.

The protein belongs to the krueppel C2H2-type zinc-finger protein family.

The protein localises to the nucleus. Its function is as follows. Transcription factor that can both act as an activator or a repressor depending on the context. Plays a central role in BMP signaling and olfactory neurogenesis. Associates with SMADs in response to bmp2 leading to activate transcription of BMP target genes. Acts as a transcriptional repressor involved in terminal olfactory receptor neurons differentiation. Involved in olfactory neurogenesis by participating in a developmental switch that regulates the transition from differentiation to maturation in olfactory receptor neurons. The polypeptide is Zinc finger protein 423 (znf423) (Danio rerio (Zebrafish)).